Here is a 117-residue protein sequence, read N- to C-terminus: Ig heavy chain V region 5-76 (117 aa).

An N-terminal signal peptide occupies residues 1 to 19 (MNFVLSLIFLALILKGVQC). A framework-1 region spans residues 20–49 (EVHLVESGGGLVKPGGSLKLSCVVSGFTFN). The cysteines at positions 41 and 115 are disulfide-linked. Positions 50 to 54 (KYAMS) are complementarity-determining-1. The interval 55–68 (WVRQTPEKRLEWVA) is framework-2. The tract at residues 69-85 (TISSGGLYTYYPDSVKG) is complementarity-determining-2. Residues 86–117 (RFTISRDNAGNTLYLQMSSLRSEDTAMYYCAR) are framework-3.

In Mus musculus (Mouse), this protein is Ig heavy chain V region 5-76.